A 387-amino-acid polypeptide reads, in one-letter code: Probable protein phosphatase 2C 25 (387 aa).

Positions glutamate 52–isoleucine 351 constitute a PPM-type phosphatase domain. Mn(2+) is bound by residues aspartate 83, glycine 84, aspartate 283, and aspartate 342.

It belongs to the PP2C family. Requires Mg(2+) as cofactor. It depends on Mn(2+) as a cofactor.

The catalysed reaction is O-phospho-L-seryl-[protein] + H2O = L-seryl-[protein] + phosphate. It catalyses the reaction O-phospho-L-threonyl-[protein] + H2O = L-threonyl-[protein] + phosphate. The chain is Probable protein phosphatase 2C 25 from Oryza sativa subsp. japonica (Rice).